A 263-amino-acid chain; its full sequence is Oxygen-evolving enhancer protein 2-1, chloroplastic (263 aa).

Residue S153 is modified to Phosphoserine.

The protein belongs to the PsbP family. As to quaternary structure, interacts with WAK1.

Its subcellular location is the plastid. The protein resides in the chloroplast thylakoid lumen. May be involved in the regulation of photosystem II. This is Oxygen-evolving enhancer protein 2-1, chloroplastic (PSBP1) from Arabidopsis thaliana (Mouse-ear cress).